We begin with the raw amino-acid sequence, 236 residues long: Cutinase (236 aa).

An N-terminal signal peptide occupies residues 1 to 20; it reads MSLTLFSFLSLVSILCIVTA. A disulfide bridge connects residues C66 and C143. The active-site Nucleophile is S154. A disulfide bridge connects residues C202 and C209. Residue D206 is part of the active site. H218 serves as the catalytic Proton donor/acceptor.

It belongs to the cutinase family. In terms of processing, the 2 disulfide bonds play a critical role in holding the catalytic residues in juxta-position; reduction of the disulfide bridges results in the complete inactivation of the enzyme.

The protein localises to the secreted. The catalysed reaction is cutin + H2O = cutin monomers.. In terms of biological role, catalyzes the hydrolysis of complex carboxylic polyesters found in the cell wall of plants. Degrades cutin, a macromolecule that forms the structure of the plant cuticle. Allows pathogenic fungi to penetrate through the cuticular barrier into the host plant during the initial stage of fungal infection. This is Cutinase (CUT1) from Blumeria hordei (Barley powdery mildew).